The chain runs to 386 residues: Beta-citrylglutamate synthase B (386 aa).

Positions 119–304 (FQELAGHGVP…VAGIIADYAA (186 aa)) constitute an ATP-grasp domain. Residues Lys158, 193–203 (QKYVKESHGRD), and Arg219 each bind ATP. Residues Asp264, Glu277, and Asn279 each contribute to the Mg(2+) site. Residues Asp264, Glu277, and Asn279 each contribute to the Mn(2+) site. The segment at 325–359 (ASETSEPELGPPASTAVDNMSASSSSVDSDPESTE) is disordered. Residues 338 to 352 (STAVDNMSASSSSVD) show a composition bias toward low complexity.

Belongs to the RimK family. Mg(2+) serves as cofactor. Mn(2+) is required as a cofactor.

Its subcellular location is the cytoplasm. The catalysed reaction is citrate + L-glutamate + ATP = beta-citrylglutamate + ADP + phosphate + H(+). It catalyses the reaction N-acetyl-L-aspartate + L-glutamate + ATP = N-acetyl-L-aspartyl-L-glutamate + ADP + phosphate + H(+). Functionally, catalyzes the synthesis of beta-citryl-L-glutamate and N-acetyl-L-aspartyl-L-glutamate. Beta-citryl-L-glutamate is synthesized more efficiently than N-acetyl-L-aspartyl-L-glutamate. This is Beta-citrylglutamate synthase B (RIMKLB) from Homo sapiens (Human).